Here is a 260-residue protein sequence, read N- to C-terminus: Glutathione S-transferase domain-containing protein DDB_G0280881 (260 aa).

In terms of domain architecture, GST N-terminal spans 7 to 96; the sequence is KVDFIFYTNG…YLAQKYNTFL (90 aa). Residues 102 to 228 form the GST C-terminal domain; it reads NPKENSDVIT…QQISEGFKNF (127 aa).

This sequence belongs to the GST superfamily.

The polypeptide is Glutathione S-transferase domain-containing protein DDB_G0280881 (Dictyostelium discoideum (Social amoeba)).